The sequence spans 292 residues: Probable ABC transporter phosphonate/phosphite binding protein PhnD2 (292 aa).

An N-terminal signal peptide occupies residues 1–20 (MKLKSLLSVFTISIVALTSA). Cys21 carries N-palmitoyl cysteine lipidation. Cys21 is lipidated: S-diacylglycerol cysteine.

This sequence belongs to the phosphate/phosphite/phosphonate binding protein family. As to quaternary structure, the complex may be composed of two ATP-binding proteins (PhnC2), two transmembrane proteins (PhnE2) and a solute-binding protein (PhnD2).

It is found in the cell membrane. Functionally, probably part of the ABC transporter complex PhnC2D2E2. Binds strongly to methylphosphonate (MPn), ethylphosphonate (EPn) and inorganic phosphite. The chain is Probable ABC transporter phosphonate/phosphite binding protein PhnD2 from Prochlorococcus marinus (strain MIT 9301).